Consider the following 532-residue polypeptide: 2-isopropylmalate synthase (532 aa).

The Pyruvate carboxyltransferase domain occupies 5 to 267; it reads VIIFDTTLRD…HTNINHQEIY (263 aa). The Mn(2+) site is built by D14, H202, H204, and N238. The interval 392-532 is regulatory domain; that stretch reads HLDYFSVQSG…SKQQNSQETV (141 aa). Residues 513–532 are disordered; the sequence is QQHNNQQQNDSKQQNSQETV.

This sequence belongs to the alpha-IPM synthase/homocitrate synthase family. LeuA type 1 subfamily. Homodimer. Mn(2+) serves as cofactor.

The protein resides in the cytoplasm. It carries out the reaction 3-methyl-2-oxobutanoate + acetyl-CoA + H2O = (2S)-2-isopropylmalate + CoA + H(+). Its pathway is amino-acid biosynthesis; L-leucine biosynthesis; L-leucine from 3-methyl-2-oxobutanoate: step 1/4. In terms of biological role, catalyzes the condensation of the acetyl group of acetyl-CoA with 3-methyl-2-oxobutanoate (2-ketoisovalerate) to form 3-carboxy-3-hydroxy-4-methylpentanoate (2-isopropylmalate). The sequence is that of 2-isopropylmalate synthase from Pectobacterium atrosepticum (strain SCRI 1043 / ATCC BAA-672) (Erwinia carotovora subsp. atroseptica).